Reading from the N-terminus, the 291-residue chain is Elongation factor Ts (291 aa).

The tract at residues 78–81 (TDFV) is involved in Mg(2+) ion dislocation from EF-Tu.

This sequence belongs to the EF-Ts family.

The protein localises to the cytoplasm. Functionally, associates with the EF-Tu.GDP complex and induces the exchange of GDP to GTP. It remains bound to the aminoacyl-tRNA.EF-Tu.GTP complex up to the GTP hydrolysis stage on the ribosome. The chain is Elongation factor Ts from Ureaplasma urealyticum serovar 10 (strain ATCC 33699 / Western).